We begin with the raw amino-acid sequence, 611 residues long: Leukotriene A-4 hydrolase (611 aa).

Lysine 73 bears the N6-acetyllysine mark. A peptide is bound by residues 135–137 (QCQ) and 267–272 (PYGGME). Histidine 296 contributes to the Zn(2+) binding site. The active-site Proton acceptor is the glutamate 297. The Zn(2+) site is built by histidine 300 and glutamate 319. Lysine 337 carries the post-translational modification N6-acetyllysine. Tyrosine 384 acts as the Proton donor in catalysis. The residue at position 416 (serine 416) is a Phosphoserine. 564–566 (RMK) is a binding site for a peptide. At lysine 573 the chain carries N6-acetyllysine.

This sequence belongs to the peptidase M1 family. The cofactor is Zn(2+). Post-translationally, phosphorylation at Ser-416 inhibits enzymatic activity.

The protein localises to the cytoplasm. The enzyme catalyses leukotriene A4 + H2O = leukotriene B4. Its pathway is lipid metabolism; leukotriene B4 biosynthesis. Inhibited by bestatin. Subject to suicide inhibition by leukotriene A4. In terms of biological role, epoxide hydrolase that catalyzes the final step in the biosynthesis of the pro-inflammatory mediator leukotriene B4. Also has aminopeptidase activity. In Chinchilla lanigera (Long-tailed chinchilla), this protein is Leukotriene A-4 hydrolase (LTA4H).